Here is a 369-residue protein sequence, read N- to C-terminus: Chorismate synthase (369 aa).

NADP(+) is bound by residues Arg-48 and Arg-54. Residues 125 to 127, 238 to 239, Gly-283, 298 to 302, and Arg-324 contribute to the FMN site; these read RSS, NA, and KPTSS.

It belongs to the chorismate synthase family. Homotetramer. Requires FMNH2 as cofactor.

The catalysed reaction is 5-O-(1-carboxyvinyl)-3-phosphoshikimate = chorismate + phosphate. The protein operates within metabolic intermediate biosynthesis; chorismate biosynthesis; chorismate from D-erythrose 4-phosphate and phosphoenolpyruvate: step 7/7. In terms of biological role, catalyzes the anti-1,4-elimination of the C-3 phosphate and the C-6 proR hydrogen from 5-enolpyruvylshikimate-3-phosphate (EPSP) to yield chorismate, which is the branch point compound that serves as the starting substrate for the three terminal pathways of aromatic amino acid biosynthesis. This reaction introduces a second double bond into the aromatic ring system. In Acidiphilium cryptum (strain JF-5), this protein is Chorismate synthase.